We begin with the raw amino-acid sequence, 692 residues long: Polyribonucleotide nucleotidyltransferase (692 aa).

Positions 484 and 490 each coordinate Mg(2+). The KH domain maps to proline 551–isoleucine 610. Residues aspartate 620 to lysine 688 form the S1 motif domain.

It belongs to the polyribonucleotide nucleotidyltransferase family. Component of the RNA degradosome, which is a multiprotein complex involved in RNA processing and mRNA degradation. The cofactor is Mg(2+).

It is found in the cytoplasm. The catalysed reaction is RNA(n+1) + phosphate = RNA(n) + a ribonucleoside 5'-diphosphate. Functionally, involved in mRNA degradation. Catalyzes the phosphorolysis of single-stranded polyribonucleotides processively in the 3'- to 5'-direction. This chain is Polyribonucleotide nucleotidyltransferase, found in Acidithiobacillus ferrooxidans (strain ATCC 53993 / BNL-5-31) (Leptospirillum ferrooxidans (ATCC 53993)).